The sequence spans 88 residues: Small ribosomal subunit protein bS20 (88 aa).

It belongs to the bacterial ribosomal protein bS20 family.

Functionally, binds directly to 16S ribosomal RNA. The sequence is that of Small ribosomal subunit protein bS20 from Methylorubrum populi (strain ATCC BAA-705 / NCIMB 13946 / BJ001) (Methylobacterium populi).